The following is a 241-amino-acid chain: DnaJ homolog subfamily C member 4 (241 aa).

The region spanning 34–99 is the J domain; sequence TYYELLGVHP…QSRRSYDDQL (66 aa). The segment covering 88–99 has biased composition (basic and acidic residues); the sequence is REQSRRSYDDQL. The segment at 88 to 129 is disordered; sequence REQSRRSYDDQLRSGSPPKSPRTTVHDKSAHQTHSSWTPPNA. Positions 119–129 are enriched in polar residues; that stretch reads QTHSSWTPPNA. A helical membrane pass occupies residues 156–175; that stretch reads VLGYCLLLMLAGMGLHYIAF. Residues 212–241 form a disordered region; the sequence is QQERQRLGQRQPPPSEPTQGPEIVPRGAGP.

It is found in the membrane. In Homo sapiens (Human), this protein is DnaJ homolog subfamily C member 4 (DNAJC4).